A 302-amino-acid polypeptide reads, in one-letter code: uncharacterized protein (302 aa).

It belongs to the HAD-like hydrolase superfamily.

This is an uncharacterized protein from Saccharomyces cerevisiae (strain ATCC 204508 / S288c) (Baker's yeast).